The primary structure comprises 186 residues: uncharacterized protein (186 aa).

The N-terminal stretch at 1–28 (MSVKPAALFRISAALAVAGLGASLIASA) is a signal peptide.

This is an uncharacterized protein from Rhizobium meliloti (strain 1021) (Ensifer meliloti).